The chain runs to 719 residues: Polyribonucleotide nucleotidyltransferase (719 aa).

D491 and D497 together coordinate Mg(2+). One can recognise a KH domain in the interval 558–617 (PRMLTIKINPEKIRDVIGKGGATIRALTEETGTQIDISDDGTIVIASVDEAQAKEAQRRI). Residues 627–695 (GQVYDGSVLR…DKGRLRLSVK (69 aa)) form the S1 motif domain.

It belongs to the polyribonucleotide nucleotidyltransferase family. The cofactor is Mg(2+).

It localises to the cytoplasm. The catalysed reaction is RNA(n+1) + phosphate = RNA(n) + a ribonucleoside 5'-diphosphate. Its function is as follows. Involved in mRNA degradation. Catalyzes the phosphorolysis of single-stranded polyribonucleotides processively in the 3'- to 5'-direction. This Bordetella petrii (strain ATCC BAA-461 / DSM 12804 / CCUG 43448) protein is Polyribonucleotide nucleotidyltransferase.